Reading from the N-terminus, the 1048-residue chain is Calcium-transporting ATPase, endoplasmic reticulum-type (1048 aa).

Over 1-63 the chain is Cytoplasmic; that stretch reads MEEKPFPAWS…WRLVLEQFDD (63 aa). Residues 64 to 84 traverse the membrane as a helical segment; that stretch reads TLVKILLGAAFISFVLAYVNQ. The Lumenal portion of the chain corresponds to 85–93; sequence DETGESGFE. Residues 94–114 traverse the membrane as a helical segment; the sequence is AYVEPLVILWILVLNAIVGVW. At 115 to 213 the chain is on the cytoplasmic side; the sequence is QESNAEKALE…DCELQAKENM (99 aa). A helical membrane pass occupies residues 214 to 234; the sequence is VFAGTTVVNGSCICIVVNTGM. The Lumenal segment spans residues 235–267; the sequence is CTEIGKIQRQIHDASMEESDTPLKKKLDEFGNR. A helical transmembrane segment spans residues 268 to 288; it reads LTFAIGVVCLVVWAINYKYFL. Residues 289–312 lie on the Cytoplasmic side of the membrane; it reads SWEVVDDWPSDFRFSFEKCAYYFK. A helical transmembrane segment spans residues 313–333; sequence IAVALAVAAIPEGLPSVITTC. 4 residues coordinate Ca(2+): valine 319, alanine 320, isoleucine 322, and glutamate 324. The Lumenal portion of the chain corresponds to 334–800; the sequence is LALGTRKMAQ…ISSNVGEVIS (467 aa). The active-site 4-aspartylphosphate intermediate is aspartate 366. Residues aspartate 728 and aspartate 732 each coordinate Mg(2+). Residues asparagine 794 and glutamate 797 each coordinate Ca(2+). Residues 801–821 form a helical membrane-spanning segment; it reads IFLTAVLGIPECLIPVQLLWV. Residues asparagine 822, threonine 825, and aspartate 826 each contribute to the Ca(2+) site. Residues 822-862 lie on the Cytoplasmic side of the membrane; sequence NLVTDGPPATALGFNPADVDIMQKPPRKNTDALINSWVFFR. The chain crosses the membrane as a helical span at residues 863–883; the sequence is YMVIGSYVGIATVGIFIVWYT. Topologically, residues 884–944 are lumenal; that stretch reads QASFLGINIV…CEYFTVGKVK (61 aa). Residues 945 to 965 form a helical membrane-spanning segment; it reads AMTLSLSVLVAIEMFNSLNAL. Glutamate 957 is a binding site for Ca(2+). Over 966-981 the chain is Cytoplasmic; the sequence is SEDNSLIKMPPWRNPW. Residues 982–1002 traverse the membrane as a helical segment; it reads LLVAMSLSFALHSVILYVPFL. Topologically, residues 1003–1007 are lumenal; the sequence is ADIFG. Residues 1008-1028 traverse the membrane as a helical segment; it reads IVPLSLYEWLLVILLSAPVIL. Over 1029–1048 the chain is Cytoplasmic; that stretch reads IDEVLKFVGRRRRRTKLKAA.

Belongs to the cation transport ATPase (P-type) (TC 3.A.3) family. Type IIA subfamily. 9-fold higher level in roots compared with leaves.

The protein localises to the endoplasmic reticulum membrane. The catalysed reaction is Ca(2+)(in) + ATP + H2O = Ca(2+)(out) + ADP + phosphate + H(+). This magnesium-dependent enzyme catalyzes the hydrolysis of ATP coupled with the translocation of calcium from the cytosol to an endomembrane compartment. In Solanum lycopersicum (Tomato), this protein is Calcium-transporting ATPase, endoplasmic reticulum-type.